The following is a 723-amino-acid chain: ATP-dependent zinc metalloprotease YME1 homolog (723 aa).

A helical membrane pass occupies residues 198–220; sequence LTRFYIFLVFCIFFGYLTGRIRV. Position 288 to 295 (288 to 295) interacts with ATP; that stretch reads GPPGTGKT. Histidine 509 provides a ligand contact to Zn(2+). The active site involves glutamate 510. Residues histidine 513 and aspartate 587 each contribute to the Zn(2+) site.

The protein in the N-terminal section; belongs to the AAA ATPase family. This sequence in the C-terminal section; belongs to the peptidase M41 family. Zn(2+) is required as a cofactor.

Its subcellular location is the mitochondrion inner membrane. The protein resides in the mitochondrion. ATP-dependent metalloprotease that catalyzes the degradation of folded and unfolded proteins with a suitable degron sequence in the mitochondrial intermembrane region. Plays an important role in regulating mitochondrial morphology and function. This chain is ATP-dependent zinc metalloprotease YME1 homolog (ymel-1), found in Caenorhabditis elegans.